We begin with the raw amino-acid sequence, 456 residues long: Toxin CfTX-1 (456 aa).

The signal sequence occupies residues 1 to 20 (MVKMLFFAFLPLLFMTGIAA).

The protein belongs to the jellyfish toxin family. Type I subfamily. Oligomer. Post-translationally, contains disulfide bonds. In terms of tissue distribution, nematocytes.

The protein localises to the secreted. It localises to the nematocyst. The protein resides in the target cell membrane. May cause profound effects on the cardiovascular system of anesthetized rats (at 25 ug/kg), since the fraction containing this toxin and CfTX-2 produces an initial increase in mean arterial pressure, followed by cardiovascular collapse in all animals within 1 minute of injection. To note, the same fraction does not induce significant change in heart rate. Has weak hemolytic activity. Is lethal to crayfish. Causes cutaneous inflammation in humans. May act as a pore-forming toxin, disrupting normal transmembrane ion concentration gradients in susceptible cells. This Chironex fleckeri (Australian box jellyfish) protein is Toxin CfTX-1.